Reading from the N-terminus, the 434-residue chain is Probable phosphoglucosamine mutase (434 aa).

Serine 91 serves as the catalytic Phosphoserine intermediate. Positions 91, 229, 231, and 233 each coordinate Mg(2+). Serine 91 carries the post-translational modification Phosphoserine.

This sequence belongs to the phosphohexose mutase family. Mg(2+) serves as cofactor. Post-translationally, activated by phosphorylation.

It catalyses the reaction alpha-D-glucosamine 1-phosphate = D-glucosamine 6-phosphate. In terms of biological role, catalyzes the conversion of glucosamine-6-phosphate to glucosamine-1-phosphate. This Methanosarcina acetivorans (strain ATCC 35395 / DSM 2834 / JCM 12185 / C2A) protein is Probable phosphoglucosamine mutase.